The following is a 103-amino-acid chain: Pyrimidine/purine nucleoside phosphorylase (103 aa).

The protein belongs to the nucleoside phosphorylase PpnP family.

It carries out the reaction a purine D-ribonucleoside + phosphate = a purine nucleobase + alpha-D-ribose 1-phosphate. The enzyme catalyses adenosine + phosphate = alpha-D-ribose 1-phosphate + adenine. It catalyses the reaction cytidine + phosphate = cytosine + alpha-D-ribose 1-phosphate. The catalysed reaction is guanosine + phosphate = alpha-D-ribose 1-phosphate + guanine. It carries out the reaction inosine + phosphate = alpha-D-ribose 1-phosphate + hypoxanthine. The enzyme catalyses thymidine + phosphate = 2-deoxy-alpha-D-ribose 1-phosphate + thymine. It catalyses the reaction uridine + phosphate = alpha-D-ribose 1-phosphate + uracil. The catalysed reaction is xanthosine + phosphate = alpha-D-ribose 1-phosphate + xanthine. Functionally, catalyzes the phosphorolysis of diverse nucleosides, yielding D-ribose 1-phosphate and the respective free bases. Can use uridine, adenosine, guanosine, cytidine, thymidine, inosine and xanthosine as substrates. Also catalyzes the reverse reactions. This Cupriavidus metallidurans (strain ATCC 43123 / DSM 2839 / NBRC 102507 / CH34) (Ralstonia metallidurans) protein is Pyrimidine/purine nucleoside phosphorylase.